A 242-amino-acid chain; its full sequence is Aliphatic sulfonates import ATP-binding protein SsuB 1 (242 aa).

The region spanning 11 to 227 is the ABC transporter domain; the sequence is VAVRRLSRAF…RPSHPDFEDL (217 aa). 43–50 lines the ATP pocket; it reads GESGSGKT.

This sequence belongs to the ABC transporter superfamily. Aliphatic sulfonates importer (TC 3.A.1.17.2) family. In terms of assembly, the complex is composed of two ATP-binding proteins (SsuB), two transmembrane proteins (SsuC) and a solute-binding protein (SsuA).

It localises to the cell inner membrane. The enzyme catalyses ATP + H2O + aliphatic sulfonate-[sulfonate-binding protein]Side 1 = ADP + phosphate + aliphatic sulfonateSide 2 + [sulfonate-binding protein]Side 1.. Functionally, part of the ABC transporter complex SsuABC involved in aliphatic sulfonates import. Responsible for energy coupling to the transport system. The polypeptide is Aliphatic sulfonates import ATP-binding protein SsuB 1 (Paracoccus denitrificans (strain Pd 1222)).